A 580-amino-acid chain; its full sequence is Probable RNA-binding protein CG14230 (580 aa).

Positions 4–81 constitute an RRM domain; that stretch reads TRFFLADLPT…EKLRVSLAKE (78 aa). Residues 89-100 show a composition bias toward basic and acidic residues; it reads REREENQRREQG. 2 disordered regions span residues 89–131 and 173–211; these read RERE…EDEE and QHRK…KSAI. Residues 110 to 120 show a composition bias toward polar residues; that stretch reads PSSQLLVQSGQ. Phosphoserine is present on Ser-231. Composition is skewed to acidic residues over residues 254-263 and 298-313; these read ENDDDEEEEQ and NEEE…EPEE. Disordered stretches follow at residues 254–316, 333–395, and 463–520; these read ENDD…ESER, SAND…SAVS, and PFSY…IPRN. Basic and acidic residues-rich tracts occupy residues 348 to 358 and 365 to 377; these read LRFDPAKEGHQ and QPKE…EETS. Polar residues predominate over residues 386 to 395; it reads AGNSQASAVS. Ser-468 carries the phosphoserine modification. Thr-475 carries the post-translational modification Phosphothreonine.

The chain is Probable RNA-binding protein CG14230 from Drosophila melanogaster (Fruit fly).